The chain runs to 227 residues: Cytochrome c oxidase subunit 2 (227 aa).

Residues 1–14 (MAYPFQLGLQDATS) are Mitochondrial intermembrane-facing. The helical transmembrane segment at 15–45 (PIMEELTNFHDHTLMIVFLISSLVLYLISLM) threads the bilayer. At 46-59 (LSTKLIHTSTMDAQ) the chain is on the mitochondrial matrix side. The chain crosses the membrane as a helical span at residues 60-87 (EVETIWTILPAIILIMIALPSLRILYMM). The Mitochondrial intermembrane portion of the chain corresponds to 88-227 (DEINNPALTV…LFENWSISMS (140 aa)). Residues H161, C196, E198, C200, H204, and M207 each contribute to the Cu cation site. Position 198 (E198) interacts with Mg(2+).

The protein belongs to the cytochrome c oxidase subunit 2 family. Component of the cytochrome c oxidase (complex IV, CIV), a multisubunit enzyme composed of 14 subunits. The complex is composed of a catalytic core of 3 subunits MT-CO1, MT-CO2 and MT-CO3, encoded in the mitochondrial DNA, and 11 supernumerary subunits COX4I, COX5A, COX5B, COX6A, COX6B, COX6C, COX7A, COX7B, COX7C, COX8 and NDUFA4, which are encoded in the nuclear genome. The complex exists as a monomer or a dimer and forms supercomplexes (SCs) in the inner mitochondrial membrane with NADH-ubiquinone oxidoreductase (complex I, CI) and ubiquinol-cytochrome c oxidoreductase (cytochrome b-c1 complex, complex III, CIII), resulting in different assemblies (supercomplex SCI(1)III(2)IV(1) and megacomplex MCI(2)III(2)IV(2)). Found in a complex with TMEM177, COA6, COX18, COX20, SCO1 and SCO2. Interacts with TMEM177 in a COX20-dependent manner. Interacts with COX20. Interacts with COX16. Cu cation is required as a cofactor.

It is found in the mitochondrion inner membrane. It catalyses the reaction 4 Fe(II)-[cytochrome c] + O2 + 8 H(+)(in) = 4 Fe(III)-[cytochrome c] + 2 H2O + 4 H(+)(out). Its function is as follows. Component of the cytochrome c oxidase, the last enzyme in the mitochondrial electron transport chain which drives oxidative phosphorylation. The respiratory chain contains 3 multisubunit complexes succinate dehydrogenase (complex II, CII), ubiquinol-cytochrome c oxidoreductase (cytochrome b-c1 complex, complex III, CIII) and cytochrome c oxidase (complex IV, CIV), that cooperate to transfer electrons derived from NADH and succinate to molecular oxygen, creating an electrochemical gradient over the inner membrane that drives transmembrane transport and the ATP synthase. Cytochrome c oxidase is the component of the respiratory chain that catalyzes the reduction of oxygen to water. Electrons originating from reduced cytochrome c in the intermembrane space (IMS) are transferred via the dinuclear copper A center (CU(A)) of subunit 2 and heme A of subunit 1 to the active site in subunit 1, a binuclear center (BNC) formed by heme A3 and copper B (CU(B)). The BNC reduces molecular oxygen to 2 water molecules using 4 electrons from cytochrome c in the IMS and 4 protons from the mitochondrial matrix. This chain is Cytochrome c oxidase subunit 2 (MT-CO2), found in Gerbilliscus robustus (Fringe-tailed gerbil).